We begin with the raw amino-acid sequence, 467 residues long: Mothers against decapentaplegic homolog 2 (467 aa).

Residue Ser-2 is modified to N-acetylserine. Thr-8 carries the phosphothreonine modification. The region spanning Pro-10 to Pro-176 is the MH1 domain. Lys-19 is subject to N6-acetyllysine. Residues Cys-74, Cys-149, Cys-161, and His-166 each contribute to the Zn(2+) site. Positions Pro-207 to Ile-217 are enriched in polar residues. A disordered region spans residues Pro-207–Pro-251. Thr-220 is subject to Phosphothreonine. The PY-motif motif lies at Pro-221–Tyr-225. Polar residues predominate over residues Ser-233–Thr-243. Ser-240 carries the phosphoserine; by CAMK2 modification. 6 positions are modified to phosphoserine: Ser-245, Ser-250, Ser-255, Ser-458, Ser-460, and Ser-464. In terms of domain architecture, MH2 spans Trp-274–Ser-467. Residues Ser-465 and Ser-467 each carry the phosphoserine; by TGFBR1 modification.

It belongs to the dwarfin/SMAD family. As to quaternary structure, monomer; in the absence of TGF-beta. Heterodimer; in the presence of TGF-beta. Forms a heterodimer with co-SMAD, SMAD4, in the nucleus to form the transactivation complex SMAD2/SMAD4. Found in a complex with SMAD3 and TRIM33 upon addition of TGF-beta. Identified in a complex that contains at least ZNF451, SMAD2, SMAD3 and SMAD4. Interacts (via the MH2 domain) with ZFYVE9; may form trimers with the SMAD4 co-SMAD. Interacts with TAZ/WWRT1. Interacts with FOXH1. Interacts with SNW1. Interacts with CREB-binding protein (CBP) and EP300. Interacts with SNON. Interacts with ALK4/ACVR1B. Interacts with SKOR1. Interacts with SKOR2. Interacts with PRDM16. Interacts (via MH2 domain) with LEMD3. Interacts with RBPMS. Interacts with WWP1. Interacts (dephosphorylated form, via the MH1 and MH2 domains) with RANBP3 (via its C-terminal R domain); the interaction results in the export of dephosphorylated SMAD3 out of the nucleus and termination of the TGF-beta signaling. Interacts with PDPK1 (via PH domain). Interacts with DAB2; the interactions are enhanced upon TGF-beta stimulation. Interacts with USP15. Interacts with PPP5C. Interacts with LDLRAD4 (via the SMAD interaction motif). Interacts (via MH2 domain) with PMEPA1 (via the SMAD interaction motif). Interacts with ZFHX3. Interacts with ZNF451. Interacts with SMURF2 when phosphorylated on Ser-465/467. Interacts with PPM1A. Interacts with TGF-beta. Interacts with TGFBR1. Interacts with TGIF. Interacts with SMAD3 and TRIM33. Interacts with ZNF580. Interacts with NEDD4L in response to TGF-beta. Interacts with HGS. Interacts with AIP1. Interacts with WWP1. Interacts with PML. Interacts weakly with ZNF8. Interacts (when phosphorylated) with RNF111; RNF111 acts as an enhancer of the transcriptional responses by mediating ubiquitination and degradation of SMAD2 inhibitors. Interacts with YAP1 (when phosphorylated at 'Ser-112'). Interacts when phosphorylated with IPO7; the interaction facilitates translocation of SMAD2 to the nucleus. Interacts with MTMR4; negatively regulates TGF-beta signaling through SMAD2 dephosphorylation and retention in endosomes. In response to TGF-beta, phosphorylated on the C-terminal SXS motif by TGF-beta and activin type 1 receptor kinases, phosphorylation declines progressively in a KMT5A-dependent manner. Phosphorylation in this motif is required for interaction with a number of proteins including SMURF2, SNON and SMAD4 in response to TGF-beta. Dephosphorylated in this motif by PPM1A leading to disruption of the SMAD2/3-SMAD4 complex, nuclear export and termination of the TGF-beta signaling. In response to decorin, the naturally occurring inhibitor of TGF-beta signaling, phosphorylated on Ser-240 by CaMK2. Phosphorylated by MAPK3 upon EGF stimulation; which increases transcriptional activity and stability, and is blocked by calmodulin. Phosphorylated by PDPK1. In terms of processing, acetylated on Lys-19 by coactivators in response to TGF-beta signaling, which increases transcriptional activity. Post-translationally, in response to TGF-beta, ubiquitinated by NEDD4L; which promotes its degradation. Monoubiquitinated, leading to prevent DNA-binding. Deubiquitination by USP15 alleviates inhibition and promotes activation of TGF-beta target genes. Ubiquitinated by RNF111, leading to its degradation: only SMAD2 proteins that are 'in use' are targeted by RNF111, RNF111 playing a key role in activating SMAD2 and regulating its turnover. As to expression, expressed in cardiomyocytes.

The protein localises to the cytoplasm. The protein resides in the nucleus. Functionally, receptor-regulated SMAD (R-SMAD) that is an intracellular signal transducer and transcriptional modulator activated by TGF-beta (transforming growth factor) and activin type 1 receptor kinases. Binds the TRE element in the promoter region of many genes that are regulated by TGF-beta and, on formation of the SMAD2/SMAD4 complex, activates transcription. Promotes TGFB1-mediated transcription of odontoblastic differentiation genes in dental papilla cells. Positively regulates PDPK1 kinase activity by stimulating its dissociation from the 14-3-3 protein YWHAQ which acts as a negative regulator. The sequence is that of Mothers against decapentaplegic homolog 2 (Smad2) from Rattus norvegicus (Rat).